The sequence spans 298 residues: MIKYYDRKTQTYQIEKVAGEKMIRWTYSSPVGMRLLETVVKKRMCSSFYGWYLDRRISRRKIHPFVCKFDLDLSIAEKNLKDFSSFNDFFYRKLKPSARSIDPCQDSLISLGDGKLLAYEDINLDCLVQVKGLTYSLKELIKDPETASKYKRGTCLILRLCPTDYHRFHFIDSGICEPSHRIKGSYYSVNPVALQKVAKLFCENKREWSIFHSDHFGDILTIEVGATFVGSIIQSYTPHQPVARGDEKGYFKFGGSTVLLFFEENKIKIDPDIVEQTKLGYETYILFGEKIGVRHKGR.

Catalysis depends on charge relay system; for autoendoproteolytic cleavage activity residues D113, H169, and S256. S256 (schiff-base intermediate with substrate; via pyruvic acid; for decarboxylase activity) is an active-site residue. Position 256 is a pyruvic acid (Ser); by autocatalysis (S256).

It belongs to the phosphatidylserine decarboxylase family. PSD-B subfamily. Prokaryotic type II sub-subfamily. In terms of assembly, heterodimer of a large membrane-associated beta subunit and a small pyruvoyl-containing alpha subunit. Pyruvate serves as cofactor. Post-translationally, is synthesized initially as an inactive proenzyme. Formation of the active enzyme involves a self-maturation process in which the active site pyruvoyl group is generated from an internal serine residue via an autocatalytic post-translational modification. Two non-identical subunits are generated from the proenzyme in this reaction, and the pyruvate is formed at the N-terminus of the alpha chain, which is derived from the carboxyl end of the proenzyme. The autoendoproteolytic cleavage occurs by a canonical serine protease mechanism, in which the side chain hydroxyl group of the serine supplies its oxygen atom to form the C-terminus of the beta chain, while the remainder of the serine residue undergoes an oxidative deamination to produce ammonia and the pyruvoyl prosthetic group on the alpha chain. During this reaction, the Ser that is part of the protease active site of the proenzyme becomes the pyruvoyl prosthetic group, which constitutes an essential element of the active site of the mature decarboxylase.

Its subcellular location is the cell membrane. The enzyme catalyses a 1,2-diacyl-sn-glycero-3-phospho-L-serine + H(+) = a 1,2-diacyl-sn-glycero-3-phosphoethanolamine + CO2. It functions in the pathway phospholipid metabolism; phosphatidylethanolamine biosynthesis; phosphatidylethanolamine from CDP-diacylglycerol: step 2/2. Functionally, catalyzes the formation of phosphatidylethanolamine (PtdEtn) from phosphatidylserine (PtdSer). This Desulfitobacterium hafniense (strain DSM 10664 / DCB-2) protein is Phosphatidylserine decarboxylase proenzyme.